A 707-amino-acid chain; its full sequence is Nucleolin 2 (707 aa).

The segment at 1–446 is disordered; it reads MGKSSKKSAV…TPASNQNQAT (446 aa). Basic and acidic residues-rich tracts occupy residues 30-40 and 47-60; these read RNAEDEIEKAV and TVRE…EEAK. Composition is skewed to acidic residues over residues 75-85, 108-120, and 144-153; these read SSEEDSSESEE, SSDD…SSDD, and DSSDESLSDD. The span at 158 to 170 shows a compositional bias: low complexity; it reads KPAAPLKKPVALA. Composition is skewed to acidic residues over residues 219–232, 248–263, and 271–287; these read DSSD…SDED, SESS…DDEA, and ESSD…SDSD. The span at 300 to 311 shows a compositional bias: basic and acidic residues; that stretch reads LTKDTKKGQSKD. Residues 312-326 show a composition bias toward acidic residues; it reads ESEDSSDESSEESGD. Residues 336–347 show a composition bias toward low complexity; it reads STTSGTTKPSPK. Positions 355–370 are enriched in acidic residues; the sequence is SDDESDEDDSSDESSD. The span at 376–394 shows a compositional bias: low complexity; sequence KQTQAKKQAPVAQESSSSD. Acidic residues predominate over residues 395–406; sequence ESSEEDSDMESD. Over residues 407 to 417 the composition is skewed to basic and acidic residues; the sequence is EPAKTPQKKET. Polar residues predominate over residues 420–429; sequence SVGSNKSATK. In terms of domain architecture, RRM 1 spans 449–525; it reads KTLFVGNLPY…RPVRLDLARE (77 aa). 2 disordered regions span residues 527-546 and 629-707; these read GAYT…PAQS and RPRP…GDDD. The region spanning 549–630 is the RRM 2 domain; the sequence is NTIFIKGFDT…YSLYVDEARP (82 aa). Positions 657-681 are enriched in basic and acidic residues; the sequence is GRGDGSRGRGDRGRGRGFGRGDRGH.

The protein resides in the nucleus. Its subcellular location is the nucleolus. Its function is as follows. Involved in pre-rRNA processing and ribosome assembly. The polypeptide is Nucleolin 2 (Oryza sativa subsp. japonica (Rice)).